Reading from the N-terminus, the 104-residue chain is MAAKIKKGDRVVVLAGKDKGKQGSVLQVLPKDNRVVVEGVNMVSRHTKPTQADPQGGIKNKEAALHVSNVAVVDSNGKPTRVGFKIEGDKKVRVAKTTGEVING.

Belongs to the universal ribosomal protein uL24 family. In terms of assembly, part of the 50S ribosomal subunit.

In terms of biological role, one of two assembly initiator proteins, it binds directly to the 5'-end of the 23S rRNA, where it nucleates assembly of the 50S subunit. Its function is as follows. One of the proteins that surrounds the polypeptide exit tunnel on the outside of the subunit. The protein is Large ribosomal subunit protein uL24 of Caulobacter vibrioides (strain ATCC 19089 / CIP 103742 / CB 15) (Caulobacter crescentus).